A 213-amino-acid polypeptide reads, in one-letter code: Anti-sigma-W factor RsiW (213 aa).

The Cytoplasmic portion of the chain corresponds to 1-86; the sequence is MSCEQHYRTL…TNRFKVWMRR (86 aa). Positions 30, 34, and 37 each coordinate Zn(2+). Residues 87-109 traverse the membrane as a helical segment; that stretch reads YPLAVAAAVFVLLMSTSLFSMWS. The Extracellular segment spans residues 110-213; it reads SDGEHVTVTG…ISDEKNSPSS (104 aa).

It belongs to the zinc-associated anti-sigma factor (ZAS) superfamily. Anti-sigma-W factor family. It depends on Zn(2+) as a cofactor. Is processed by three successive proteolytic events. First, the extracellular region of RsiW is cleaved by PrsW (Site-1 cleavage) in response to cell envelope stresses. Next, it undergoes cleavage at an intramembrane site (Site-2 cleavage) mediated by RasP. This cleavage uncovers a cryptic proteolytic tag with conserved alanine residues in the transmembrane segment, that is recognized mainly by the ClpXP protease, which completely degrades the protein in the cytoplasm and leads to the induction of the sigma-W-controlled genes.

The protein resides in the membrane. Is the anti-sigma factor for SigW. The presence of RsiW leads to the inactivation of SigW, and its proteolytic destruction to sigma-W activation. The chain is Anti-sigma-W factor RsiW (rsiW) from Halalkalibacterium halodurans (strain ATCC BAA-125 / DSM 18197 / FERM 7344 / JCM 9153 / C-125) (Bacillus halodurans).